The following is a 474-amino-acid chain: tRNA-2-methylthio-N(6)-dimethylallyladenosine synthase (474 aa).

The MTTase N-terminal domain occupies 3–120 (KKLHIKTWGC…LPDMIEQVRR (118 aa)). Cysteine 12, cysteine 49, cysteine 83, cysteine 157, cysteine 161, and cysteine 164 together coordinate [4Fe-4S] cluster. The region spanning 143–375 (RAEGPTAFVS…QDRITQQAMR (233 aa)) is the Radical SAM core domain. The region spanning 378-441 (RHMMGTVQRI…TNSLRGKFIR (64 aa)) is the TRAM domain.

Belongs to the methylthiotransferase family. MiaB subfamily. As to quaternary structure, monomer. It depends on [4Fe-4S] cluster as a cofactor.

It localises to the cytoplasm. The enzyme catalyses N(6)-dimethylallyladenosine(37) in tRNA + (sulfur carrier)-SH + AH2 + 2 S-adenosyl-L-methionine = 2-methylsulfanyl-N(6)-dimethylallyladenosine(37) in tRNA + (sulfur carrier)-H + 5'-deoxyadenosine + L-methionine + A + S-adenosyl-L-homocysteine + 2 H(+). Its function is as follows. Catalyzes the methylthiolation of N6-(dimethylallyl)adenosine (i(6)A), leading to the formation of 2-methylthio-N6-(dimethylallyl)adenosine (ms(2)i(6)A) at position 37 in tRNAs that read codons beginning with uridine. This chain is tRNA-2-methylthio-N(6)-dimethylallyladenosine synthase, found in Shewanella sp. (strain W3-18-1).